The sequence spans 256 residues: Thiazole synthase (256 aa).

Catalysis depends on Lys-99, which acts as the Schiff-base intermediate with DXP. 1-deoxy-D-xylulose 5-phosphate-binding positions include Gly-160, Ala-186–Gly-187, and Asn-208–Thr-209.

It belongs to the ThiG family. Homotetramer. Forms heterodimers with either ThiH or ThiS.

Its subcellular location is the cytoplasm. It catalyses the reaction [ThiS sulfur-carrier protein]-C-terminal-Gly-aminoethanethioate + 2-iminoacetate + 1-deoxy-D-xylulose 5-phosphate = [ThiS sulfur-carrier protein]-C-terminal Gly-Gly + 2-[(2R,5Z)-2-carboxy-4-methylthiazol-5(2H)-ylidene]ethyl phosphate + 2 H2O + H(+). Its pathway is cofactor biosynthesis; thiamine diphosphate biosynthesis. In terms of biological role, catalyzes the rearrangement of 1-deoxy-D-xylulose 5-phosphate (DXP) to produce the thiazole phosphate moiety of thiamine. Sulfur is provided by the thiocarboxylate moiety of the carrier protein ThiS. In vitro, sulfur can be provided by H(2)S. The chain is Thiazole synthase from Neorickettsia sennetsu (strain ATCC VR-367 / Miyayama) (Ehrlichia sennetsu).